Reading from the N-terminus, the 141-residue chain is U1 small nuclear ribonucleoprotein C (141 aa).

The Matrin-type zinc finger occupies Tyr4–Leu36. Residues Leu69–Gln141 form a disordered region. The span at Met83 to Gln97 shows a compositional bias: pro residues. Low complexity-rich tracts occupy residues Gly100–Met110 and Gln124–Gln141.

This sequence belongs to the U1 small nuclear ribonucleoprotein C family. Component of the U1 snRNP. The U1 snRNP is composed of the U1 snRNA and the 7 core Sm proteins SNRPB, SNRPD1, SNRPD2, SNRPD3, SNRPE, SNRPF and SNRPG that assemble in a heptameric protein ring on the Sm site of the small nuclear RNA to form the core snRNP, and at least 3 U1 snRNP-specific proteins SNRNP70/U1-70K, SNRPA/U1-A and SNRPC/U1-C. SNRPC/U1-C interacts with U1 snRNA and the 5' splice-site region of the pre-mRNA.

It localises to the nucleus. Functionally, component of the spliceosomal U1 snRNP, which is essential for recognition of the pre-mRNA 5' splice-site and the subsequent assembly of the spliceosome. SNRPC/U1-C is directly involved in initial 5' splice-site recognition for both constitutive and regulated alternative splicing. The interaction with the 5' splice-site seems to precede base-pairing between the pre-mRNA and the U1 snRNA. Stimulates commitment or early (E) complex formation by stabilizing the base pairing of the 5' end of the U1 snRNA and the 5' splice-site region. The sequence is that of U1 small nuclear ribonucleoprotein C from Heterostelium pallidum (strain ATCC 26659 / Pp 5 / PN500) (Cellular slime mold).